A 473-amino-acid chain; its full sequence is ATP synthase subunit beta (473 aa).

158–165 (GGAGVGKT) provides a ligand contact to ATP.

This sequence belongs to the ATPase alpha/beta chains family. In terms of assembly, F-type ATPases have 2 components, CF(1) - the catalytic core - and CF(0) - the membrane proton channel. CF(1) has five subunits: alpha(3), beta(3), gamma(1), delta(1), epsilon(1). CF(0) has three main subunits: a(1), b(2) and c(9-12). The alpha and beta chains form an alternating ring which encloses part of the gamma chain. CF(1) is attached to CF(0) by a central stalk formed by the gamma and epsilon chains, while a peripheral stalk is formed by the delta and b chains.

The protein resides in the cell membrane. The enzyme catalyses ATP + H2O + 4 H(+)(in) = ADP + phosphate + 5 H(+)(out). Its function is as follows. Produces ATP from ADP in the presence of a proton gradient across the membrane. The catalytic sites are hosted primarily by the beta subunits. The polypeptide is ATP synthase subunit beta (Geobacillus sp. (strain WCH70)).